The chain runs to 924 residues: Exocyst complex component 2 (924 aa).

The IPT/TIG domain occupies 8–93 (PLVTGISPNE…GTSTVSFKLL (86 aa)). Residues 240-260 (QKLENVLNRASNTADTLFQEV) adopt a coiled-coil conformation. 3 positions are modified to phosphoserine: Ser-431, Ser-432, and Ser-435. A Phosphothreonine modification is found at Thr-440. At Lys-454 the chain carries N6-acetyllysine. Ser-888 is subject to Phosphoserine.

Belongs to the SEC5 family. In terms of assembly, the exocyst complex is composed of EXOC1, EXOC2, EXOC3, EXOC4, EXOC5, EXOC6, EXOC7 and EXOC8. Interacts with EXOC3L1. Interacts with GNEFR/DELGEF; this interaction occurs only in the presence of magnesium or manganese and is stimulated by dCTP or GTP. Interacts with RALA and RALB. Interacts with ARL13B; regulates ARL13B localization to the cilium membrane. In terms of tissue distribution, widely expressed with highest levels in brain and placenta.

Its subcellular location is the midbody. The protein resides in the midbody ring. Functionally, component of the exocyst complex involved in the docking of exocytic vesicles with fusion sites on the plasma membrane. The sequence is that of Exocyst complex component 2 (EXOC2) from Homo sapiens (Human).